A 184-amino-acid polypeptide reads, in one-letter code: Peptide deformylase (184 aa).

Cysteine 98 and histidine 140 together coordinate Fe cation. The active site involves glutamate 141. Histidine 144 is a Fe cation binding site.

The protein belongs to the polypeptide deformylase family. Fe(2+) is required as a cofactor.

The enzyme catalyses N-terminal N-formyl-L-methionyl-[peptide] + H2O = N-terminal L-methionyl-[peptide] + formate. Functionally, removes the formyl group from the N-terminal Met of newly synthesized proteins. Requires at least a dipeptide for an efficient rate of reaction. N-terminal L-methionine is a prerequisite for activity but the enzyme has broad specificity at other positions. In Phocaeicola vulgatus (strain ATCC 8482 / DSM 1447 / JCM 5826 / CCUG 4940 / NBRC 14291 / NCTC 11154) (Bacteroides vulgatus), this protein is Peptide deformylase.